Reading from the N-terminus, the 343-residue chain is Uroporphyrinogen decarboxylase (343 aa).

Substrate-binding positions include 24 to 28 (RQAGR), Phe-43, Asp-74, Tyr-151, Ser-206, and His-321.

The protein belongs to the uroporphyrinogen decarboxylase family. As to quaternary structure, homodimer.

The protein localises to the cytoplasm. The enzyme catalyses uroporphyrinogen III + 4 H(+) = coproporphyrinogen III + 4 CO2. It functions in the pathway porphyrin-containing compound metabolism; protoporphyrin-IX biosynthesis; coproporphyrinogen-III from 5-aminolevulinate: step 4/4. Its function is as follows. Catalyzes the decarboxylation of four acetate groups of uroporphyrinogen-III to yield coproporphyrinogen-III. The protein is Uroporphyrinogen decarboxylase of Thermosynechococcus vestitus (strain NIES-2133 / IAM M-273 / BP-1).